A 105-amino-acid polypeptide reads, in one-letter code: UPF0145 protein CCNA_02462 (105 aa).

Belongs to the UPF0145 family.

The protein is UPF0145 protein CCNA_02462 of Caulobacter vibrioides (strain NA1000 / CB15N) (Caulobacter crescentus).